Reading from the N-terminus, the 263-residue chain is MANADLDKQPDSVSSVLKVFGILQALGEEREIGITELSQRVMMSKSTVYRFLQTMKTLGYVAQEGESEKYSLTLKLFELGARALQNVDLIRSADIQMRELSRLTKETIHLGALDEDSIVYIHKIDSMYNLRMYSRIGRRNPLYSTAIGKVLLAWRDRDEVKQILEGVEYKRSTERTITSTEALLPVLDQVREQGYGEDNEEQEEGLRCIAVPVFDRFGVVIAGLSISFPTLRFSEERLQEYVAMLHTAARKISAQMGYHDYPF.

An HTH iclR-type domain is found at 13 to 74 (VSSVLKVFGI…GESEKYSLTL (62 aa)). The H-T-H motif DNA-binding region spans 34–53 (ITELSQRVMMSKSTVYRFLQ). Positions 89 to 258 (LIRSADIQMR…ARKISAQMGY (170 aa)) constitute an IclR-ED domain.

It is found in the cytoplasm. Functionally, transcriptional repressor that negatively regulates the expression of kdgT, kdgK and kdgA, which encode proteins involved in transport and catabolism of 2-keto-3-deoxygluconate (KDG). Also represses expression of eda, which encodes the Entner-Doudoroff aldolase, by binding to its P2 promoter region. The sequence is that of HTH-type transcriptional regulator KdgR from Escherichia coli (strain K12).